The primary structure comprises 348 residues: MEENKQKALSAAVSQIERQFGKGSVMRMGDSTVSRDIEAISTGSLGLDIALGIGGLPKGRIVEIYGPESSGKTTLTLQVIAECQKMGGTAAFIDAEHALDPSYAQKLGVKVDELLVSQPDTGEQALEITDMLVRSAAVDVVIIDSVAALTPKAEIEGEMGDSHVGLQARLMSQALRKLTANIKRSNTLVIFINQIRMKIGVMFGSPETTTGGNALKFYASVRLDIRRIGSIKKGEEILGSETRVKVVKNKVAPPFKMTEFDILYNEGISRESEIINLGVQLNLIEKSGAWYSYKQEKIGQGKENVRLYLKENPQVAAELEQQIRTELLEKKLSVLASSSEDLFETIDD.

66 to 73 (GPESSGKT) contributes to the ATP binding site.

The protein belongs to the RecA family.

The protein resides in the cytoplasm. In terms of biological role, can catalyze the hydrolysis of ATP in the presence of single-stranded DNA, the ATP-dependent uptake of single-stranded DNA by duplex DNA, and the ATP-dependent hybridization of homologous single-stranded DNAs. It interacts with LexA causing its activation and leading to its autocatalytic cleavage. The chain is Protein RecA from Legionella pneumophila.